A 287-amino-acid chain; its full sequence is MATPSQHDLRNDFRALLASSECYFTASVFDPMSARIAADLGFEVGILGGSVASLQVLAAPDFALITLSEFVEQATRIGRVTRLPVIADADHGYGNALNVMRTITELERAGVAALTIEDTLLPAQYGHKSTDLIPLDEGVGKMRAALEARIDPAMAIIARTNAGQLDDEAAVERVCAYQAAGVDAICLVGVRDFDHLERLAAPLDIPLMLVTYGNPELRDRARLAALGVRVVVNGHAAYFAAIKATYDCLREQRDIAASELNASQLATRYSTLDEYREWARDYMDVKE.

Residue serine 50 participates in substrate binding. Aspartate 88 is a Mg(2+) binding site. Substrate-binding residues include arginine 159 and histidine 235.

The protein belongs to the isocitrate lyase/PEP mutase superfamily. Oxaloacetate decarboxylase family. In terms of assembly, homotetramer; dimer of dimers. The cofactor is Mg(2+).

The enzyme catalyses oxaloacetate + H(+) = pyruvate + CO2. Its function is as follows. Catalyzes the decarboxylation of oxaloacetate into pyruvate. Seems to play a role in maintaining cellular concentrations of bicarbonate and pyruvate. The chain is Oxaloacetate decarboxylase from Chromohalobacter salexigens (strain ATCC BAA-138 / DSM 3043 / CIP 106854 / NCIMB 13768 / 1H11).